A 446-amino-acid chain; its full sequence is Probable glucuronosyltransferase Os04g0650300 (446 aa).

Residues 1 to 30 (MKLPLLRPLWPMLSPAAGSPDSPPEPSKPS) are Cytoplasmic-facing. The chain crosses the membrane as a helical; Signal-anchor for type II membrane protein span at residues 31 to 51 (LPAAWLLLHALFCATSMAVGF). Topologically, residues 52 to 446 (RFSRLIVYLL…TTLLNTEGQH (395 aa)) are lumenal. Residue Asn-87 is glycosylated (N-linked (GlcNAc...) asparagine). The segment at 425-446 (QQDAKPETPLKRTTLLNTEGQH) is disordered.

The protein belongs to the glycosyltransferase 43 family.

It is found in the golgi apparatus membrane. In terms of biological role, involved in the synthesis of glucuronoxylan hemicellulose in secondary cell walls. The protein is Probable glucuronosyltransferase Os04g0650300 of Oryza sativa subsp. japonica (Rice).